We begin with the raw amino-acid sequence, 903 residues long: Valine--tRNA ligase (903 aa).

The span at 1-15 (MVCVTDQNNENPSQN) shows a compositional bias: polar residues. The disordered stretch occupies residues 1–22 (MVCVTDQNNENPSQNRADKLPK). The 'HIGH' region motif lies at 61-71 (PNVTGQLHMGH). The 'KMSKS' region motif lies at 552 to 556 (KMSKS). Residue Lys555 participates in ATP binding. Residues 836–902 (TVDVAAERKR…ERITKRLEEL (67 aa)) adopt a coiled-coil conformation.

This sequence belongs to the class-I aminoacyl-tRNA synthetase family. ValS type 1 subfamily. Monomer.

It localises to the cytoplasm. The catalysed reaction is tRNA(Val) + L-valine + ATP = L-valyl-tRNA(Val) + AMP + diphosphate. Functionally, catalyzes the attachment of valine to tRNA(Val). As ValRS can inadvertently accommodate and process structurally similar amino acids such as threonine, to avoid such errors, it has a 'posttransfer' editing activity that hydrolyzes mischarged Thr-tRNA(Val) in a tRNA-dependent manner. This Corynebacterium efficiens (strain DSM 44549 / YS-314 / AJ 12310 / JCM 11189 / NBRC 100395) protein is Valine--tRNA ligase.